Reading from the N-terminus, the 479-residue chain is Solute carrier family 7 member 13 (479 aa).

Over 1–14 (MAMDIEKKIYLKRQ) the chain is Cytoplasmic. Residues 15-35 (LGYFWGTNFLIINIIGAGIFV) traverse the membrane as a helical segment. The Extracellular segment spans residues 36–47 (SPKGVLQYSSMN). A helical transmembrane segment spans residues 48 to 68 (VGVSLCVWVFCAVLSMTSTLC). The Cytoplasmic portion of the chain corresponds to 69-89 (AAEIGITFPYTVAHYYFLKRC). Residues 90–110 (FGPFVAFLRLWTSLFTGPGVL) traverse the membrane as a helical segment. The Extracellular segment spans residues 111–129 (ASQALLLAEYGIQPFYPSC). The helical transmembrane segment at 130–150 (SAPAVPKKCLALAMLWIVGIL) threads the bilayer. Residues 151 to 165 (NSRGVKELSWLQTVS) lie on the Cytoplasmic side of the membrane. A helical membrane pass occupies residues 166–186 (MVLKMGILSFISLSGLFLLVT). Over 187 to 208 (GRKENVRRLQNAFDAEFPEVSR) the chain is Extracellular. A helical membrane pass occupies residues 209 to 229 (LIEAIFQGYFAFSGGGSFTYV). The Cytoplasmic portion of the chain corresponds to 230 to 242 (AGELKEPSKTIPR). The helical transmembrane segment at 243-263 (CIFTALPLVTVVYLLANLSYL) threads the bilayer. Residues 264–289 (TVLSPQELLSSDAVALTWTDRVIPQL) lie on the Extracellular side of the membrane. The chain crosses the membrane as a helical span at residues 290-310 (TWSVPFAISASLFSNLVTSVF). Over 311-338 (ETSRTSYIASRNGQLPLLCSTLNVHSSP) the chain is Cytoplasmic. The helical transmembrane segment at 339-359 (FIAVLLDVSMGSIAIVLTNLI) threads the bilayer. Position 360 (Glu360) is a topological domain, extracellular. The chain crosses the membrane as a helical span at residues 361-381 (LINYLFFVFSIWTVLSVIGIL). At 382-396 (KLRYQEPNLHRPYKV) the chain is on the cytoplasmic side. A helical membrane pass occupies residues 397–417 (FSPFLFITAAISLSMVLIPLI). Topologically, residues 418 to 423 (KSPKMQ) are extracellular. A helical membrane pass occupies residues 424–444 (YIYVFLFFLGGLLFYVPLIHF). Topologically, residues 445–479 (KLKLIWFQKLTCYLQLLFNICIPDVSDEHVAEEES) are cytoplasmic.

This sequence belongs to the amino acid-polyamine-organocation (APC) superfamily. Disulfide-linked heterodimer composed of the catalytic light subunit SLC7A13 and the heavy subunit SLC3A1.

The protein localises to the apical cell membrane. It carries out the reaction L-cystine(out) + L-aspartate(in) = L-cystine(in) + L-aspartate(out). It catalyses the reaction L-cystine(out) = L-cystine(in). The enzyme catalyses L-aspartate(in) + L-glutamate(out) = L-aspartate(out) + L-glutamate(in). The catalysed reaction is L-aspartate(in) + L-glutamine(out) = L-aspartate(out) + L-glutamine(in). It carries out the reaction L-aspartate(in) + L-methionine(out) = L-aspartate(out) + L-methionine(in). It catalyses the reaction L-leucine(out) + L-aspartate(in) = L-leucine(in) + L-aspartate(out). The enzyme catalyses L-valine(out) + L-aspartate(in) = L-valine(in) + L-aspartate(out). The catalysed reaction is L-aspartate(in) + L-phenylalanine(out) = L-aspartate(out) + L-phenylalanine(in). It carries out the reaction L-tyrosine(out) + L-aspartate(in) = L-tyrosine(in) + L-aspartate(out). It catalyses the reaction L-tryptophan(out) + L-aspartate(in) = L-tryptophan(in) + L-aspartate(out). Its function is as follows. Associates with SLC3A1/rBAT to form a functional heterodimeric complex that transports anionic and neutral amino acids across the apical plasma membrane of renal epithelium. Preferentially mediates exchange transport, but can also operate via facilitated diffusion. May act as a major transporter for L-cystine in late proximal tubules, ensuring its reabsorption from the luminal fluid in exchange for cytosolic L-glutamate or L-aspartate. The polypeptide is Solute carrier family 7 member 13 (Slc7a13) (Rattus norvegicus (Rat)).